The sequence spans 430 residues: Chromatin assembly factor 1 p55 subunit (430 aa).

Serine 11 and serine 100 each carry phosphoserine. WD repeat units follow at residues asparagine 126–threonine 159, glycine 179–aspartate 210, glycine 229–aspartate 260, alanine 275–aspartate 306, serine 319–aspartate 350, and glycine 376–glutamine 407.

The protein belongs to the WD repeat RBAP46/RBAP48/MSI1 family. As to quaternary structure, probably binds directly to helix 1 of the histone fold of histone H4, a region that is not accessible when H4 is in chromatin. Self associates. Associates with chromatin. Component of the CAF-1 complex, composed of Caf1-55, Caf1-105 and Caf1-180; within the CAF-1 complex, Caf1-180 interacts directly with both Caf1-55 and Caf1-105. Component of the NuRD complex, composed of at least Caf1-55, Mi-2, MTA1-like and HDAC1/Rpd3. Within the NuRD complex, Caf1-55 may interact directly with Mi-2, MTA1-like and HDAC1/Rpd3. The NuRD complex may also associate with the methyl-DNA binding protein MBD-like via Caf1-55 and Mi-2. Component of the NURF complex, composed of Caf1-55, E(bx), Nurf-38 and Iswi. Component of the polycomb repressive complex 2 (PRC2, also known as the Esc/E(Z) complex), composed of Caf1-55, esc, E(z), Su(z)12, and possibly pho. PRC2 associates with the accessory components Jarid2 and jing to form the PRC2 Jarid2-jing variant (PRC2.2). PRC2 may also associate with Pcl and HDAC1/Rpd3 during early embryogenesis. Interacts with Rbf and Rbf2. Component of the DREAM complex at least composed of Myb, Caf1-55, mip40, mip120, mip130, E2f2, Dp, Rbf, Rbf2, lin-52, HDAC1/Rpd3 and l(3)mbt.

The protein resides in the nucleus. Its function is as follows. Core histone-binding subunit that may target chromatin assembly factors, chromatin remodeling factors and histone deacetylases to their histone substrates in a manner that is regulated by nucleosomal DNA. Component of several complexes which regulate chromatin metabolism. These include the chromatin assembly factor 1 (CAF-1) complex, which is required for chromatin assembly following DNA replication and DNA repair; the nucleosome remodeling and deacetylase complex (the NuRD complex), which promotes transcriptional repression by histone deacetylation and nucleosome remodeling; the nucleosome remodeling factor (NURF) complex, which catalyzes ATP-dependent nucleosome sliding and facilitates transcription of chromatin; and the polycomb group (PcG) repressor complex ESC-E(Z), which promotes repression of homeotic genes during development. Also required for transcriptional repression of E2F target genes by E2f2 and Rbf or Rbf2. In Drosophila melanogaster (Fruit fly), this protein is Chromatin assembly factor 1 p55 subunit.